The sequence spans 144 residues: Oleosin H2 (144 aa).

Ala2 is subject to N-acetylalanine. 3 consecutive transmembrane segments (helical) span residues 28–48 (VLAV…AGLI), 53–73 (IIGL…LVPA), and 75–95 (LTIA…ITAL). The short motif at 61–72 (PLFVIFSPILVP) is the Proline-knot element. The segment at 124–144 (QETVGQKTREAGQRSQDVIRP) is disordered.

The protein belongs to the oleosin family. Expressed in seeds (at protein level).

The protein localises to the lipid droplet. The protein resides in the membrane. Its function is as follows. May have a structural role to stabilize the lipid body during desiccation of the seed by preventing coalescence of the oil. Probably interacts with both lipid and phospholipid moieties of lipid bodies. May also provide recognition signals for specific lipase anchorage in lipolysis during seedling growth. The protein is Oleosin H2 of Sesamum indicum (Oriental sesame).